Here is a 392-residue protein sequence, read N- to C-terminus: Phosphoglycerate kinase (392 aa).

Residues 19–21 (DFN), Arg35, 58–61 (HMGR), Arg117, and Arg150 each bind substrate. ATP contacts are provided by residues Lys201, Glu323, and 349 to 352 (GGDS).

It belongs to the phosphoglycerate kinase family. In terms of assembly, monomer.

The protein resides in the cytoplasm. It carries out the reaction (2R)-3-phosphoglycerate + ATP = (2R)-3-phospho-glyceroyl phosphate + ADP. It functions in the pathway carbohydrate degradation; glycolysis; pyruvate from D-glyceraldehyde 3-phosphate: step 2/5. The sequence is that of Phosphoglycerate kinase from Desulfotalea psychrophila (strain LSv54 / DSM 12343).